Consider the following 421-residue polypeptide: 3-phosphoshikimate 1-carboxyvinyltransferase (421 aa).

3 residues coordinate 3-phosphoshikimate: Lys21, Ser22, and Arg26. Lys21 provides a ligand contact to phosphoenolpyruvate. Positions 93 and 121 each coordinate phosphoenolpyruvate. Residues Ser166, Ser167, Gln168, Ser194, Asp310, and Lys337 each contribute to the 3-phosphoshikimate site. Position 168 (Gln168) interacts with phosphoenolpyruvate. Asp310 functions as the Proton acceptor in the catalytic mechanism. Residues Arg341, Arg382, and Lys407 each coordinate phosphoenolpyruvate.

It belongs to the EPSP synthase family. Monomer.

The protein localises to the cytoplasm. It carries out the reaction 3-phosphoshikimate + phosphoenolpyruvate = 5-O-(1-carboxyvinyl)-3-phosphoshikimate + phosphate. It functions in the pathway metabolic intermediate biosynthesis; chorismate biosynthesis. Catalyzes the transfer of the enolpyruvyl moiety of phosphoenolpyruvate (PEP) to the 5-hydroxyl of shikimate-3-phosphate (S3P) to produce enolpyruvyl shikimate-3-phosphate and inorganic phosphate. This Methanoregula boonei (strain DSM 21154 / JCM 14090 / 6A8) protein is 3-phosphoshikimate 1-carboxyvinyltransferase.